The following is a 144-amino-acid chain: Protein cornichon (144 aa).

At Met1 to Tyr10 the chain is on the lumenal side. Residues Met1–Leu57 form an interaction with grk region. A helical membrane pass occupies residues Ile11–Phe31. The Cytoplasmic segment spans residues Asp32–Tyr56. Residues Leu57 to Leu77 form a helical membrane-spanning segment. Over Asn78–Lys122 the chain is Lumenal. Residues Leu123–Ser143 form a helical membrane-spanning segment. Thr144 is a topological domain (cytoplasmic).

Belongs to the cornichon family. As to quaternary structure, interacts with grk.

The protein localises to the endoplasmic reticulum membrane. In terms of biological role, acts as a cargo receptor necessary for the transportation of gurken (grk) to a transitional endoplasmic reticulum (tER) site and promotes its incorporation into coat protein complex II (COPII) vesicles. Associated with gurken, produces a signal received by torpedo resulting in a signaling pathway that first establishes posterior follicle cell fates and normal localization of the anterior and posterior determinants, later they act in a signaling event inducing dorsal follicle cell fates and regulating the dorsal-ventral pattern of egg and embryo. This Drosophila virilis (Fruit fly) protein is Protein cornichon (cni).